We begin with the raw amino-acid sequence, 392 residues long: Metacaspase-1 (392 aa).

Over residues 1–14 (MYPGSGNYSYNNRP) the composition is skewed to polar residues. The interval 1-87 (MYPGSGNYSY…PSSIQQGNGQ (87 aa)) is disordered. The span at 41–51 (QQQQYQDQYQG) shows a compositional bias: low complexity. The segment covering 53-63 (NRGQYQGQYQD) has biased composition (polar residues). Active-site residues include His-182 and Cys-238.

Belongs to the peptidase C14B family.

Its function is as follows. Involved in cell death (apoptosis). This Candida glabrata (strain ATCC 2001 / BCRC 20586 / JCM 3761 / NBRC 0622 / NRRL Y-65 / CBS 138) (Yeast) protein is Metacaspase-1 (MCA1).